The primary structure comprises 145 residues: Large ribosomal subunit protein uL15 (145 aa).

Residues 1-52 (MKLNTIAPAEGSKKDRRRVGRGIGSGFGKTAGRGHKGQHARSGGYHKVGFEG) form a disordered region. The span at 21 to 31 (RGIGSGFGKTA) shows a compositional bias: gly residues.

Belongs to the universal ribosomal protein uL15 family. Part of the 50S ribosomal subunit.

Binds to the 23S rRNA. This chain is Large ribosomal subunit protein uL15, found in Acidithiobacillus ferrooxidans (strain ATCC 53993 / BNL-5-31) (Leptospirillum ferrooxidans (ATCC 53993)).